We begin with the raw amino-acid sequence, 446 residues long: Rhamnogalacturonase A (446 aa).

The N-terminal stretch at 1–18 (MPALPILALALAPLLVNG) is a signal peptide. Residues C39 and C65 are joined by a disulfide bond. N-linked (GlcNAc...) asparagine glycosylation is found at N50, N115, and N124. D216 acts as the Proton donor in catalysis. Residues C218 and C235 are joined by a disulfide bond. N236, N281, and N318 each carry an N-linked (GlcNAc...) asparagine glycan. 2 disulfides stabilise this stretch: C341-C347 and C369-C378.

It belongs to the glycosyl hydrolase 28 family.

It localises to the secreted. The enzyme catalyses Endohydrolysis of alpha-D-GalA-(1-&gt;2)-alpha-L-Rha glycosidic bond in the rhamnogalacturonan I backbone with initial inversion of anomeric configuration releasing oligosaccharides with beta-D-GalA at the reducing end.. In terms of biological role, pectinolytic enzymes consist of four classes of enzymes: pectine lyase, polygalacturonase, pectin methylesterase and rhamnogalacturonase. Hydrolyzes alpha-D-galacturonopyranosyl-(1,2)-alpha-L-rhamnopyranosyl linkages in the backbone of the hairy regions of pectins. The chain is Rhamnogalacturonase A (rhgA) from Aspergillus niger.